The sequence spans 137 residues: Small ribosomal subunit protein bS16 (137 aa).

2 stretches are compositionally biased toward basic and acidic residues: residues 80-99 (KSPEEAQKGGMRKGEFKRLQ) and 111-125 (VATEEPKAEEAKEAP). Positions 80–137 (KSPEEAQKGGMRKGEFKRLQAEQAAKAQKKAVATEEPKAEEAKEAPPAESQAAEGKEE) are disordered. Residues 126–137 (PAESQAAEGKEE) are compositionally biased toward low complexity.

Belongs to the bacterial ribosomal protein bS16 family.

The protein is Small ribosomal subunit protein bS16 of Coxiella burnetii (strain Dugway 5J108-111).